We begin with the raw amino-acid sequence, 26 residues long: Coenzyme PQQ synthesis protein A (26 aa).

A cross-link (pyrroloquinoline quinone (Glu-Tyr)) is located at residues E16 to Y20.

This sequence belongs to the PqqA family.

It functions in the pathway cofactor biosynthesis; pyrroloquinoline quinone biosynthesis. Functionally, required for coenzyme pyrroloquinoline quinone (PQQ) biosynthesis. PQQ is probably formed by cross-linking a specific glutamate to a specific tyrosine residue and excising these residues from the peptide. This chain is Coenzyme PQQ synthesis protein A, found in Gluconacetobacter diazotrophicus (strain ATCC 49037 / DSM 5601 / CCUG 37298 / CIP 103539 / LMG 7603 / PAl5).